The primary structure comprises 209 residues: Chaperone protein TorD (209 aa).

The protein belongs to the TorD/DmsD family. TorD subfamily.

It is found in the cytoplasm. Functionally, involved in the biogenesis of TorA. Acts on TorA before the insertion of the molybdenum cofactor and, as a result, probably favors a conformation of the apoenzyme that is competent for acquiring the cofactor. This is Chaperone protein TorD from Salmonella bongori (strain ATCC 43975 / DSM 13772 / NCTC 12419).